Consider the following 413-residue polypeptide: 2,3-bisphosphoglycerate-independent phosphoglycerate mutase (413 aa).

Belongs to the BPG-independent phosphoglycerate mutase family. A-PGAM subfamily.

It catalyses the reaction (2R)-2-phosphoglycerate = (2R)-3-phosphoglycerate. It participates in carbohydrate degradation; glycolysis; pyruvate from D-glyceraldehyde 3-phosphate: step 3/5. In terms of biological role, catalyzes the interconversion of 2-phosphoglycerate and 3-phosphoglycerate. In Metallosphaera sedula (strain ATCC 51363 / DSM 5348 / JCM 9185 / NBRC 15509 / TH2), this protein is 2,3-bisphosphoglycerate-independent phosphoglycerate mutase.